Consider the following 177-residue polypeptide: Peptide deformylase 2 (177 aa).

Residues cysteine 99 and histidine 141 each coordinate Fe cation. The active site involves glutamate 142. A Fe cation-binding site is contributed by histidine 145.

Belongs to the polypeptide deformylase family. It depends on Fe(2+) as a cofactor.

The enzyme catalyses N-terminal N-formyl-L-methionyl-[peptide] + H2O = N-terminal L-methionyl-[peptide] + formate. Removes the formyl group from the N-terminal Met of newly synthesized proteins. Requires at least a dipeptide for an efficient rate of reaction. N-terminal L-methionine is a prerequisite for activity but the enzyme has broad specificity at other positions. The chain is Peptide deformylase 2 from Ralstonia nicotianae (strain ATCC BAA-1114 / GMI1000) (Ralstonia solanacearum).